The chain runs to 89 residues: Small ribosomal subunit protein uS19 (89 aa).

Belongs to the universal ribosomal protein uS19 family.

Functionally, protein S19 forms a complex with S13 that binds strongly to the 16S ribosomal RNA. The protein is Small ribosomal subunit protein uS19 of Rhodopirellula baltica (strain DSM 10527 / NCIMB 13988 / SH1).